The primary structure comprises 1528 residues: Mitogen-activated protein kinase kinae kinase MCK1 (1528 aa).

The segment covering 1 to 11 (MYPGSSQSRPY) has biased composition (low complexity). Disordered stretches follow at residues 1–84 (MYPG…PAPR), 109–208 (ATAP…VPGI), 303–418 (VHAR…NNVR), 449–481 (INGR…KLPF), 607–652 (VKPP…EARL), 695–731 (GKPV…APSA), 746–786 (VQGS…SQPM), 811–929 (SANN…SDDG), 943–1012 (KKAK…EDGK), and 1086–1191 (ATPL…ALLR). Residues 12–21 (QVPPPPPMSP) are compositionally biased toward pro residues. A compositionally biased stretch (low complexity) spans 22–31 (PLSQMHQQMS). Over residues 53–64 (APPPPPPGPPPA) the composition is skewed to pro residues. Over residues 157–173 (SSQTWQTTSSSSTNTAS) the composition is skewed to low complexity. Composition is skewed to polar residues over residues 174–183 (VNDNVQSNAP), 191–205 (NNSA…SSNV), and 318–327 (HGRQGSINSR). The span at 328-337 (GNDKGTHDGS) shows a compositional bias: basic and acidic residues. Positions 338 to 363 (DSPNTPSSQSRSTTIPTFPDGSSFSN) are enriched in polar residues. Low complexity predominate over residues 396–408 (SSTPKSSTLSVSP). Positions 409–418 (HSSRFGNNVR) are enriched in polar residues. 2 stretches are compositionally biased toward polar residues: residues 613–622 (SQQSTWSAGD) and 630–641 (GTSSSMSRQQNT). Basic and acidic residues-rich tracts occupy residues 642–652 (LKDDQSEEARL) and 698–714 (VDFD…KNTD). Over residues 846–860 (RSQTAGDLSPISQMP) the composition is skewed to polar residues. A compositionally biased stretch (acidic residues) spans 917 to 928 (QSDDDSGDDSDD). The segment covering 977 to 986 (VSFNSPQSAR) has biased composition (polar residues). The segment covering 1001–1012 (PKSDMWDSEDGK) has biased composition (basic and acidic residues). The span at 1086-1111 (ATPLNSLPPSRVQSMYNESDTLGSDE) shows a compositional bias: polar residues. Residues 1142–1152 (SIREKARGAHE) show a composition bias toward basic and acidic residues. A compositionally biased stretch (polar residues) spans 1158 to 1188 (TQTSMAAPQGLSRSGGTPATETQPTQNNSSA). The region spanning 1238-1507 (WFKGQLIGKG…NKLLSQHPFC (270 aa)) is the Protein kinase domain. Residues 1244–1252 (IGKGTYGRV) and K1267 contribute to the ATP site.

It belongs to the protein kinase superfamily. STE Ser/Thr protein kinase family. MAP kinase kinase kinase subfamily. In terms of assembly, interacts with the adapter protein MST50 and MIP11.

It carries out the reaction L-seryl-[protein] + ATP = O-phospho-L-seryl-[protein] + ADP + H(+). The catalysed reaction is L-threonyl-[protein] + ATP = O-phospho-L-threonyl-[protein] + ADP + H(+). In terms of biological role, mitogen-activated protein kinase kinase kinase; part of the MCK1-MKK2-MPS1 MAP kinase (MAPK) signal transduction cascade that is essential for appressorium formation, penetration and invasive growth. Beside its role in pathogenesis, the MPS1 cascade is active in conidiation and cellular stress responses. Targets downstream of the the MPS1-MAPK pathway include transcription factors MIG1 and SWI6, as well as GSK1 and MPG1. The polypeptide is Mitogen-activated protein kinase kinae kinase MCK1 (Pyricularia oryzae (strain 70-15 / ATCC MYA-4617 / FGSC 8958) (Rice blast fungus)).